The primary structure comprises 151 residues: Transcriptional repressor NrdR (151 aa).

Residues 3–34 (CPYCGYEETRVLDSRVDSSGMTVRRRRECVKC) fold into a zinc finger. In terms of domain architecture, ATP-cone spans 49-139 (VFVVKKDGKR…VYKDFREIDQ (91 aa)).

It belongs to the NrdR family. Zn(2+) is required as a cofactor.

Negatively regulates transcription of bacterial ribonucleotide reductase nrd genes and operons by binding to NrdR-boxes. This chain is Transcriptional repressor NrdR, found in Thermosipho melanesiensis (strain DSM 12029 / CIP 104789 / BI429).